Here is a 1074-residue protein sequence, read N- to C-terminus: ADAMTS-like protein 4 (1074 aa).

An N-terminal signal peptide occupies residues M1 to D24. The 46-residue stretch at G48 to E93 folds into the TSP type-1 1 domain. The disordered stretch occupies residues Q77 to L342. Residues R103–R119 are compositionally biased toward polar residues. Basic and acidic residues predominate over residues L132–I152. The segment covering A206 to P226 has biased composition (polar residues). Gly residues predominate over residues G310–P323. A glycan (N-linked (GlcNAc...) (complex) asparagine) is linked at N490. 5 consecutive TSP type-1 domains span residues C723–L782, C783–T842, W845–E909, R910–A969, and C970–S1026. A glycan (N-linked (GlcNAc...) asparagine) is linked at N773. In terms of domain architecture, PLAC spans P1029–L1066.

Interacts with CTSB. Interacts with FBN1. In terms of processing, N-glycosylated. Can be O-fucosylated by POFUT2 on a serine or a threonine residue found within the consensus sequence C1-X(2)-(S/T)-C2-G of the TSP type-1 repeat domains where C1 and C2 are the first and second cysteine residue of the repeat, respectively. Fucosylated repeats can then be further glycosylated by the addition of a beta-1,3-glucose residue by the glucosyltransferase, B3GALTL. Fucosylation mediates the efficient secretion of ADAMTS family members. Can also be C-glycosylated with one or two mannose molecules on tryptophan residues within the consensus sequence W-X-X-W of the TPRs. N- and C-glycosylations can also facilitate secretion. Expressed in colon, heart, leukocyte, liver, lung, skeletal muscle, spleen, testis and placenta. Weaker expression in bone marrow, brain tissue, kidney and pancreas. Expression studies in fetal tissues reveal strong expression in heart, kidney, liver, lung and skeletal muscle, but weaker expression in fetal brain and skin.

It localises to the secreted. It is found in the extracellular space. The protein localises to the extracellular matrix. Functionally, positive regulation of apoptosis. May facilitate FBN1 microfibril biogenesis. In Homo sapiens (Human), this protein is ADAMTS-like protein 4 (ADAMTSL4).